We begin with the raw amino-acid sequence, 433 residues long: 5-methylthioadenosine/S-adenosylhomocysteine deaminase (433 aa).

H67 and H69 together coordinate Zn(2+). Residues E96, R148, and H186 each coordinate substrate. H213 provides a ligand contact to Zn(2+). The substrate site is built by E216 and D301. A Zn(2+)-binding site is contributed by D301.

This sequence belongs to the metallo-dependent hydrolases superfamily. MTA/SAH deaminase family. The cofactor is Zn(2+).

It catalyses the reaction S-adenosyl-L-homocysteine + H2O + H(+) = S-inosyl-L-homocysteine + NH4(+). The catalysed reaction is S-methyl-5'-thioadenosine + H2O + H(+) = S-methyl-5'-thioinosine + NH4(+). Catalyzes the deamination of 5-methylthioadenosine and S-adenosyl-L-homocysteine into 5-methylthioinosine and S-inosyl-L-homocysteine, respectively. Is also able to deaminate adenosine. The polypeptide is 5-methylthioadenosine/S-adenosylhomocysteine deaminase (Desulforamulus reducens (strain ATCC BAA-1160 / DSM 100696 / MI-1) (Desulfotomaculum reducens)).